A 530-amino-acid polypeptide reads, in one-letter code: MARAGWTGLLPLYVCLLLTCGFAKAGKLLVVPMDGSHWFTMQSVVEKLILRGHEVVVVMPEVSWQLGRSLNCTVKTYSTSYTLEDQDREFMVFADARWTAPLRSAFSLLTSSSNGIFDLFFSNCRSLFNDRKLVEYLKESCFDAVFLDPFDACGLIVAKYFSLPSVVFARGIFCHYLEEGAQCPAPLSYVPRLLLGFSDAMTFKERVWNHIMHLEEHLFCPYFFKNVLEIASEILQTPVTAYDLYSHTSIWLLRTDFVLEYPKPVMPNMIFIGGINCHQGKPVPMEFEAYINASGEHGIVVFSLGSMVSEIPEKKAMAIADALGKIPQTVLWRYTGTRPSNLANNTILVKWLPQNDLLGHPMTRAFITHAGSHGVYESICNGVPMVMMPLFGDQMDNAKRMETKGAGVTLNVLEMTSEDLENALKAVINDKSYKENIMRLSSLHKDRPVEPLDLAVFWVEFVMRHKGAPHLRPAAHDLTWYQYHSLDVIGFLLAVVLTVAFITFKCCAYGYRKCLGKKGRVKKAHKSKTH.

The N-terminal stretch at 1–25 (MARAGWTGLLPLYVCLLLTCGFAKA) is a signal peptide. N-linked (GlcNAc...) asparagine glycans are attached at residues Asn71, Asn292, and Asn344. The helical transmembrane segment at 488-504 (VIGFLLAVVLTVAFITF) threads the bilayer.

This sequence belongs to the UDP-glycosyltransferase family. Homodimer. Homooligomer. Interacts with UGT1A1, UGT1A3, UGT1A4, UGT1A6, UGT1A8, UGT1A9 and UGT1A10 to form heterodimers. Isoform 1 interacts with isoform 2/i2 suggesting that oligomerization is involved in negative regulation of transferase activity by isoform 2. Isoform 1 also interacts with respective i2 isoforms of UGT1A1, UGT1A3, UGT1A4, UGT1A6, UGT1A8, UGT1A9 and UGT1A10. Liver and gastric tissue. Isoform 1 and isoform 2 are expressed in esophagus. Neither isoform is expressed in liver, kidney, colon and small intestine.

Its subcellular location is the endoplasmic reticulum membrane. It carries out the reaction glucuronate acceptor + UDP-alpha-D-glucuronate = acceptor beta-D-glucuronoside + UDP + H(+). The catalysed reaction is 17alpha-estradiol + UDP-alpha-D-glucuronate = 17alpha-estradiol 3-O-(beta-D-glucuronate) + UDP + H(+). It catalyses the reaction prunetin + UDP-alpha-D-glucuronate = prunetin-5-O-beta-D-glucuronide + UDP. The enzyme catalyses 5-epi-5-F2t-IsoP + UDP-alpha-D-glucuronate = 5-epi-5-F2t-IsoP-glucuronide + UDP + H(+). It carries out the reaction (E)-ferulate + UDP-alpha-D-glucuronate = (E)-ferulic acid beta-D-glucuronate ester + UDP. The catalysed reaction is candesartan + UDP-alpha-D-glucuronate = candesartan O-beta-D-glucuronoside + UDP. It catalyses the reaction SN-38 + UDP-alpha-D-glucuronate = SN-38 O-beta-D-glucuronide + UDP + H(+). The enzyme catalyses mycophenolate + UDP-alpha-D-glucuronate = mycophenolate 7-O-beta-D-glucuronide + UDP + H(+). In terms of biological role, UDP-glucuronosyltransferase (UGT) that catalyzes phase II biotransformation reactions in which lipophilic substrates are conjugated with glucuronic acid to increase the metabolite's water solubility, thereby facilitating excretion into either the urine or bile. Essential for the elimination and detoxification of drugs, xenobiotics and endogenous compounds. Catalyzes the glucuronidation of endogenous estrogen hormone epiestradiol. Involved in the glucuronidation of F2-isoprostane (5-epi-5-F2t-IsoP). Involved in the glucuronidation of the phytochemical ferulic acid at the carboxylic acid group. Also catalyzes the glucuronidation of the isoflavones genistein, daidzein, glycitein, formononetin, biochanin A and prunetin, which are phytoestrogens with anticancer and cardiovascular properties. Involved in the glucuronidation of the AGTR1 angiotensin receptor antagonist caderastan, a drug which can inhibit the effect of angiotensin II. Involved in the biotransformation of 7-ethyl-10-hydroxycamptothecin (SN-38), the pharmacologically active metabolite of the anticancer drug irinotecan. Also metabolizes mycophenolate, an immunosuppressive agent. Lacks UGT glucuronidation activity but acts as a negative regulator of isoform 1. The protein is UDP-glucuronosyltransferase 1A7 of Homo sapiens (Human).